A 1095-amino-acid chain; its full sequence is Inactive phospholipase C-like protein 1 (1095 aa).

Residues 1 to 11 are compositionally biased toward basic and acidic residues; that stretch reads MAEGAAGREDP. The segment at 1–61 is disordered; sequence MAEGAAGRED…PGAAGTPADS (61 aa). A phosphoserine mark is found at Ser47 and Ser77. Residues 83-222 are interaction with PPP1C; the sequence is SNQKCGGRKK…IWVSGLRYLV (140 aa). Thr93 is subject to Phosphothreonine; by PKA. Ser95 is subject to Phosphoserine. The PH domain maps to 113 to 223; sequence SFMQAGCELK…WVSGLRYLVS (111 aa). One can recognise a PI-PLC X-box domain in the interval 398-542; that stretch reads QDMTQPLSHY…LKRMIIVKGK (145 aa). Positions 543–567 are interaction with GABA A beta subunit; that stretch reads KLPSDPDVLEGEVTDEDEEAEMSRR. Thr556 carries the post-translational modification Phosphothreonine. Phosphoserine is present on Ser569. Residues 585 to 701 form the PI-PLC Y-box domain; the sequence is LSDLVSICKS…GYVLRPSIMR (117 aa). The 130-residue stretch at 701 to 830 folds into the C2 domain; it reads RDEVSYFSAN…PGYRHVPLRS (130 aa). 2 coiled-coil regions span residues 894–914 and 1034–1059; these read LREA…IKEL and LKGQ…QLAC. The tract at residues 1066-1095 is disordered; sequence KAPSSSAEAKSKRSLEAIEEKESSEENGKL. Residues 1074-1095 show a composition bias toward basic and acidic residues; it reads AKSKRSLEAIEEKESSEENGKL. Ser1079 carries the phosphoserine modification.

In terms of assembly, interacts with PPP2CA. Interacts with Ins(1,4,5)P3, Ins(1,4,5,6)P4, GABARAP, GABA receptor beta subunits, GABA receptor gamma-2 subunits and PPP1C. May form a ternary complex with GABA receptor beta subunit and GABARAP. The formation of a ternary complex with GABA receptor beta subunit and GABARAP could be the key step for facilitating the association of GABARAP with the GABA receptor gamma-2 subunit and to allow it to be transported at the right destination. In terms of processing, phosphorylated by the catalytic subunit of PKA. Phosphorylation of Thr-93 resulted in dissociation of PPP1C from PRIP1. As to expression, expressed in a variety of fetal and adult organs including brain, lung and kidney. Its expression was greatly reduced in small and non-small cell lung carcinoma. Isoform 1 is predominantly expressed in brain.

It localises to the cytoplasm. In terms of biological role, involved in an inositol phospholipid-based intracellular signaling cascade. Shows no PLC activity to phosphatidylinositol 4,5-bisphosphate and phosphatidylinositol. Component in the phospho-dependent endocytosis process of GABA A receptor. Regulates the turnover of receptors and thus contributes to the maintenance of GABA-mediated synaptic inhibition. Its aberrant expression could contribute to the genesis and progression of lung carcinoma. Acts as an inhibitor of PPP1C. This Homo sapiens (Human) protein is Inactive phospholipase C-like protein 1 (PLCL1).